We begin with the raw amino-acid sequence, 66 residues long: UPF0337 protein SpyM3_0896 (66 aa).

This sequence belongs to the UPF0337 (CsbD) family.

This Streptococcus pyogenes serotype M3 (strain ATCC BAA-595 / MGAS315) protein is UPF0337 protein SpyM3_0896.